A 180-amino-acid polypeptide reads, in one-letter code: RNA polymerase sigma-E factor (180 aa).

The short motif at 36–49 (DLLQTALARTYGRW) is the Polymerase core binding element. A DNA-binding region (H-T-H motif) is located at residues 130-149 (TEETAAALGMSAGTVKSTLH).

It belongs to the sigma-70 factor family. ECF subfamily.

It is found in the cytoplasm. Its function is as follows. Sigma factors are initiation factors that promote the attachment of RNA polymerase to specific initiation sites and are then released. This sigma factor is required for the synthesis of the antibiotic actinomycin. In Streptomyces antibioticus, this protein is RNA polymerase sigma-E factor (sigE).